We begin with the raw amino-acid sequence, 875 residues long: Probable serine/threonine-protein kinase samkC (875 aa).

Over residues 1 to 12 (METTTITSILDD) the composition is skewed to polar residues. The tract at residues 1 to 47 (METTTITSILDDNNNNNNNNNNNNNNNNNNNNNNNNNNNNNNNNNYN) is disordered. Residues 13-45 (NNNNNNNNNNNNNNNNNNNNNNNNNNNNNNNNN) show a composition bias toward low complexity. Residues 51–116 (WDNEMVCKWL…SEFDDLKNIF (66 aa)) form the SAM domain. Residues 135 to 162 (DNNNLNNLNNNNNNNNNNNNNNNNNNNN) adopt a coiled-coil conformation. Residues 136–168 (NNNLNNLNNNNNNNNNNNNNNNNNNNNNNNNNN) show a composition bias toward low complexity. Residues 136–170 (NNNLNNLNNNNNNNNNNNNNNNNNNNNNNNNNNKT) are disordered. Residues 181–452 (YVFIKQMKGS…SKQLLNFSWF (272 aa)) form the Protein kinase domain. Residues 187-195 (MKGSVNCSL) and Lys-210 each bind ATP. The active-site Proton acceptor is Asp-301. 2 disordered regions span residues 331-362 (NNND…NDTN) and 461-718 (SEPQ…NNNN). Residues 474–554 (PQTSQSKPKP…KPKPSSSLSS (81 aa)) show a composition bias toward low complexity. Positions 555 to 564 (EPPPLEPQPK) are enriched in pro residues. Composition is skewed to low complexity over residues 565–581 (PQTS…LSSS), 589–611 (QPTQ…SQPT), and 617–653 (QPKS…QQQK). Positions 626–655 (QSKQQQQQQQQQQQQQQQQQQQQQQQQKSK) form a coiled coil. A compositionally biased stretch (basic and acidic residues) spans 654–663 (SKPEQSKSKP). Residues 664–718 (EQSQSKPQPGQPLQSPSKPQPIPSTTKTTTTTTTTTTPNNNNNNNNNNNNNNNNN) are compositionally biased toward low complexity. A helical membrane pass occupies residues 842 to 862 (TLILYTFYYFLSNTLIYQIIL).

It belongs to the protein kinase superfamily. Ser/Thr protein kinase family.

It is found in the membrane. It carries out the reaction L-seryl-[protein] + ATP = O-phospho-L-seryl-[protein] + ADP + H(+). The catalysed reaction is L-threonyl-[protein] + ATP = O-phospho-L-threonyl-[protein] + ADP + H(+). This chain is Probable serine/threonine-protein kinase samkC (samkC), found in Dictyostelium discoideum (Social amoeba).